The chain runs to 662 residues: Probable quinol oxidase subunit 1 (662 aa).

The next 2 helical transmembrane spans lie at 14-34 (WMITMAQIGAPFLVIGLIAVI) and 58-78 (VMYLICAVLMFVRGGIDALLI). Position 102 (His-102) interacts with Fe(II)-heme a. The next 8 helical transmembrane spans lie at 103-123 (GVIMIIFMAMPFIFGLWNIVV), 140-160 (VSFWLFFAGMILFNLSFIIGG), 187-207 (IAIQISGLGTLATGINFFVTI), 228-248 (FITTLIVILAFPPLTVALALM), 273-293 (FFWVWGHPEVYIVILPAFGIY), 311-331 (MVWATAGIAFLSFLVWVHHFF), 336-356 (GALINSFFSISTMLIGIPTGV), and 376-396 (MLFSLAFIPNFLLGGVTGVML). Cu cation contacts are provided by His-279, Tyr-283, His-328, and His-329. Residues 279–283 (HPEVY) constitute a cross-link (1'-histidyl-3'-tyrosine (His-Tyr)). Heme a3 is bound at residue His-414. The next 5 membrane-spanning stretches (helical) occupy residues 415–435 (FHYTLVTGVVFACLAGLIFWY), 451–471 (CFWFFMIGFNVCFLPQFILGL), 493–513 (ISTIGALLMAIGFLFLVVSIV), 587–604 (PVGFWIGIFMTIGGFFLI), and 608–627 (VIPALICLFGIFGTMIYRSF). Fe(II)-heme a is bound at residue His-416.

This sequence belongs to the heme-copper respiratory oxidase family. Cu cation serves as cofactor. Requires ferriheme a as cofactor. It depends on Heme A3. as a cofactor.

The protein localises to the cell membrane. The catalysed reaction is 2 a quinol + O2 = 2 a quinone + 2 H2O. It functions in the pathway energy metabolism; oxidative phosphorylation. Functionally, catalyzes quinol oxidation with the concomitant reduction of oxygen to water. The chain is Probable quinol oxidase subunit 1 (qoxB) from Staphylococcus aureus (strain COL).